A 268-amino-acid chain; its full sequence is MQEARKCWGCGLVAILREGCGKDFFMLTRTDIETNMFPAAGSPPVRWRISEGLVAYGQAVEEMEREVAAIAAGEADELVWLLEHPPLYTAGTSADVADLIEPDRFPVFATGRGGEYTYHGPGQRVVYVMLDLKRRRQDVRAYVAALEDVIIRTLDKMNVRGERREDRVGVWVRRPEKPLLPDGGMAEDKIAALGIRLRKWVSFHGLSINVDPDLSHFSGIVPCGISAYGVTSLVDLGLPVMIGDVDVLLREAFEEVFGPAVPETGAGG.

A BPL/LPL catalytic domain is found at 73–261 (GEADELVWLL…AFEEVFGPAV (189 aa)). Residues 112–119 (RGGEYTYH), 192–194 (ALG), and 205–207 (GLS) contribute to the substrate site. Catalysis depends on Cys-223, which acts as the Acyl-thioester intermediate.

Belongs to the LipB family.

It localises to the cytoplasm. It carries out the reaction octanoyl-[ACP] + L-lysyl-[protein] = N(6)-octanoyl-L-lysyl-[protein] + holo-[ACP] + H(+). The protein operates within protein modification; protein lipoylation via endogenous pathway; protein N(6)-(lipoyl)lysine from octanoyl-[acyl-carrier-protein]: step 1/2. Catalyzes the transfer of endogenously produced octanoic acid from octanoyl-acyl-carrier-protein onto the lipoyl domains of lipoate-dependent enzymes. Lipoyl-ACP can also act as a substrate although octanoyl-ACP is likely to be the physiological substrate. The sequence is that of Octanoyltransferase from Agrobacterium fabrum (strain C58 / ATCC 33970) (Agrobacterium tumefaciens (strain C58)).